The chain runs to 124 residues: MSDDIKKYLDGLLQKVSGLYVIQITDRDGVPLLRVSQEKNVDFALMPSFIPTFTTACDQASKLGLGRNKTIISMYSNYQVVQMNKLPLILTFVGAENCNTGHILALEHQVDGYLEDIKQAVTEA.

This sequence belongs to the LAMTOR3 family. Part of the Ragulator complex composed of Lamtor3, Lamtor2, CG14184, CG14812, and Lamtor4.

Its function is as follows. Regulator of the TOR pathway, a signaling cascade that promotes cell growth in response to growth factors, energy levels, and amino acids. As part of the Ragulator complex, may activate the TOR signaling cascade in response to amino acids. This chain is Ragulator complex protein LAMTOR3 homolog, found in Drosophila melanogaster (Fruit fly).